Consider the following 405-residue polypeptide: Prostaglandin E2 receptor EP1 subtype (405 aa).

The Extracellular portion of the chain corresponds to 1-39 (MSPYGLNLSLVDEATTCVTPRVPNTSVVLPTGGNGTSPA). Residues Asn-7, Asn-24, and Asn-34 are each glycosylated (N-linked (GlcNAc...) asparagine). Residues 40–62 (LPIFSMTLGAVSNVLALALLAQV) form a helical membrane-spanning segment. Topologically, residues 63 to 80 (AGRLRRRRSTATFLLFVA) are cytoplasmic. Residues 81–99 (SLLAIDLAGHVIPGALVLR) traverse the membrane as a helical segment. Residues 100–113 (LYTAGRAPAGGACH) are Extracellular-facing. A disulfide bridge connects residues Cys-112 and Cys-190. The helical transmembrane segment at 114-135 (FLGGCMVFFGLCPLLLGCGMAV) threads the bilayer. Residues 136 to 157 (ERCVGVTQPLIHAARVSVARAR) lie on the Cytoplasmic side of the membrane. The helical transmembrane segment at 158-179 (LALALLAAMALAVALLPLVHVG) threads the bilayer. Residues 180-202 (HYELQYPGTWCFISLGPPGGWRQ) lie on the Extracellular side of the membrane. A helical membrane pass occupies residues 203–228 (ALLAGLFAGLGLAALLAALVCNTLSG). The Cytoplasmic segment spans residues 229 to 301 (LALLRARWRR…HAHDVEMVGQ (73 aa)). A helical transmembrane segment spans residues 302–323 (LVGIMVVSCICWSPLLVLVVLA). At 324-337 (IGGWNSNSLQRPLF) the chain is on the extracellular side. Residues 338-357 (LAVRLASWNQILDPWVYILL) traverse the membrane as a helical segment. Topologically, residues 358–405 (RQAMLRQLLRLLPLRVSAKGGPTELSLTKSAWEASSLRSSRHSGFSHL) are cytoplasmic.

It belongs to the G-protein coupled receptor 1 family. In terms of processing, phosphorylated. In terms of tissue distribution, highly abundant in kidney and lung. Found in a lesser extent in spleen, colon, and thymus. Also expressed in uterine myometrium and endometrium.

It is found in the cell membrane. In terms of biological role, receptor for prostaglandin E2 (PGE2). The activity of this receptor is mediated by G(q) proteins which activate a phosphatidylinositol-calcium second messenger system. May play a role as an important modulator of renal function. Implicated the smooth muscle contractile response to PGE2 in various tissues. Isoform 1 and isoform 2 have identical ligand binding properties, but isoform 2 lacks coupling to calcium mobilization and may therefore attenuate the action of PGE2 on tissues. The chain is Prostaglandin E2 receptor EP1 subtype (Ptger1) from Rattus norvegicus (Rat).